A 152-amino-acid chain; its full sequence is MSEKYVVTWDMLQIHARKLAQRLLPAEQWKGIIAVSRGGLVPGALLARELGIRHVDTVCISSYDHDNQREMKVIKRAEGDGEGFIVVDDLVDTGGTAKAIRDMYPKAHFVTIFAKPAGQPLVDDYVIDIPQDTWIEQPWDMCVVFVPPLSGR.

Residues 37–38 (RG), Arg69, and 88–96 (DDLVDTGGT) contribute to the 5-phospho-alpha-D-ribose 1-diphosphate site. Arg69 is a binding site for GMP. Position 89 (Asp89) interacts with Mg(2+). Positions 92 and 135 each coordinate guanine. Xanthine contacts are provided by Asp92 and Ile135. Residues 92–96 (DTGGT) and 134–135 (WI) contribute to the GMP site.

This sequence belongs to the purine/pyrimidine phosphoribosyltransferase family. XGPT subfamily. In terms of assembly, homotetramer. Requires Mg(2+) as cofactor.

The protein resides in the cell inner membrane. The enzyme catalyses GMP + diphosphate = guanine + 5-phospho-alpha-D-ribose 1-diphosphate. The catalysed reaction is XMP + diphosphate = xanthine + 5-phospho-alpha-D-ribose 1-diphosphate. It catalyses the reaction IMP + diphosphate = hypoxanthine + 5-phospho-alpha-D-ribose 1-diphosphate. The protein operates within purine metabolism; GMP biosynthesis via salvage pathway; GMP from guanine: step 1/1. It functions in the pathway purine metabolism; XMP biosynthesis via salvage pathway; XMP from xanthine: step 1/1. Functionally, purine salvage pathway enzyme that catalyzes the transfer of the ribosyl-5-phosphate group from 5-phospho-alpha-D-ribose 1-diphosphate (PRPP) to the N9 position of the 6-oxopurines guanine and xanthine to form the corresponding ribonucleotides GMP (guanosine 5'-monophosphate) and XMP (xanthosine 5'-monophosphate), with the release of PPi. To a lesser extent, also acts on hypoxanthine. The chain is Xanthine-guanine phosphoribosyltransferase from Pectobacterium atrosepticum (strain SCRI 1043 / ATCC BAA-672) (Erwinia carotovora subsp. atroseptica).